We begin with the raw amino-acid sequence, 344 residues long: DNA-directed RNA polymerase subunit alpha (344 aa).

Positions 1–246 are alpha N-terminal domain (alpha-NTD); that stretch reads MPVEKFLKDF…EFLFPLIDFE (246 aa). An alpha C-terminal domain (alpha-CTD) region spans residues 259-344; that stretch reads ESSNLLDMSI…VLSKNVKISE (86 aa).

The protein belongs to the RNA polymerase alpha chain family. In terms of assembly, homodimer. The RNAP catalytic core consists of 2 alpha, 1 beta, 1 beta' and 1 omega subunit. When a sigma factor is associated with the core the holoenzyme is formed, which can initiate transcription.

The enzyme catalyses RNA(n) + a ribonucleoside 5'-triphosphate = RNA(n+1) + diphosphate. In terms of biological role, DNA-dependent RNA polymerase catalyzes the transcription of DNA into RNA using the four ribonucleoside triphosphates as substrates. In Borrelia garinii subsp. bavariensis (strain ATCC BAA-2496 / DSM 23469 / PBi) (Borreliella bavariensis), this protein is DNA-directed RNA polymerase subunit alpha.